We begin with the raw amino-acid sequence, 143 residues long: UPF0201 protein Pars_1985 (143 aa).

The protein belongs to the UPF0201 family.

This chain is UPF0201 protein Pars_1985, found in Pyrobaculum arsenaticum (strain DSM 13514 / JCM 11321 / PZ6).